Here is a 119-residue protein sequence, read N- to C-terminus: MANIKKGDLVQVITGRTQAKGGDRGKQGRVLSVLVERNRVVVEGVNFVTKHVRVGQTQRGSKTGGIETVEAPIHISNVALVDPESKKPTRVGFRTETVEKDGVSKTVRVRYAKKSGKDL.

The protein belongs to the universal ribosomal protein uL24 family. In terms of assembly, part of the 50S ribosomal subunit.

Its function is as follows. One of two assembly initiator proteins, it binds directly to the 5'-end of the 23S rRNA, where it nucleates assembly of the 50S subunit. Functionally, one of the proteins that surrounds the polypeptide exit tunnel on the outside of the subunit. This Clavibacter sepedonicus (Clavibacter michiganensis subsp. sepedonicus) protein is Large ribosomal subunit protein uL24.